We begin with the raw amino-acid sequence, 528 residues long: Benzoylformate decarboxylase (528 aa).

2 residues coordinate Mg(2+): glutamine 117 and leucine 118. The segment at 377 to 460 is thiamine pyrophosphate binding; sequence TSTVTAFWQR…IILKNGTYGA (84 aa). 3 residues coordinate Ca(2+): aspartate 428, asparagine 455, and threonine 457.

The protein belongs to the TPP enzyme family. Homotetramer. It depends on Ca(2+) as a cofactor. Requires thiamine diphosphate as cofactor. The cofactor is Mg(2+).

It catalyses the reaction phenylglyoxylate + H(+) = benzaldehyde + CO2. It functions in the pathway aromatic compound metabolism; (R)-mandelate degradation; benzoate from (R)-mandelate: step 3/4. This chain is Benzoylformate decarboxylase (mdlC), found in Pseudomonas aeruginosa (strain ATCC 15692 / DSM 22644 / CIP 104116 / JCM 14847 / LMG 12228 / 1C / PRS 101 / PAO1).